Reading from the N-terminus, the 275-residue chain is Large ribosomal subunit protein uL2 (275 aa).

The segment at 223-275 (VAMNPIDHPHGGGEGRTGEAREPVSPWGTPSKGYKTRRNKRTNNMIVQRRKRK) is disordered. The span at 229–244 (DHPHGGGEGRTGEARE) shows a compositional bias: basic and acidic residues.

The protein belongs to the universal ribosomal protein uL2 family. In terms of assembly, part of the 50S ribosomal subunit. Forms a bridge to the 30S subunit in the 70S ribosome.

Functionally, one of the primary rRNA binding proteins. Required for association of the 30S and 50S subunits to form the 70S ribosome, for tRNA binding and peptide bond formation. It has been suggested to have peptidyltransferase activity; this is somewhat controversial. Makes several contacts with the 16S rRNA in the 70S ribosome. This chain is Large ribosomal subunit protein uL2, found in Bordetella avium (strain 197N).